The following is a 619-amino-acid chain: Chaperone protein HscA homolog (619 aa).

It belongs to the heat shock protein 70 family.

Chaperone involved in the maturation of iron-sulfur cluster-containing proteins. Has a low intrinsic ATPase activity which is markedly stimulated by HscB. The protein is Chaperone protein HscA homolog of Methylococcus capsulatus (strain ATCC 33009 / NCIMB 11132 / Bath).